Reading from the N-terminus, the 125-residue chain is Monothiol glutaredoxin-S2 (125 aa).

The region spanning 28–124 (AERVGRLVRE…PRLREVGALC (97 aa)) is the Glutaredoxin domain. Cys48 serves as a coordination point for [2Fe-2S] cluster.

It belongs to the glutaredoxin family. CC-type subfamily.

The protein resides in the cytoplasm. Functionally, may only reduce GSH-thiol disulfides, but not protein disulfides. The protein is Monothiol glutaredoxin-S2 (GRXS2) of Oryza sativa subsp. japonica (Rice).